The following is a 352-amino-acid chain: tRNA (guanine-N(1)-)-methyltransferase (352 aa).

S-adenosyl-L-methionine is bound by residues Gly-109 and 129–134 (IGDYVL).

It belongs to the RNA methyltransferase TrmD family. Homodimer.

Its subcellular location is the cytoplasm. The enzyme catalyses guanosine(37) in tRNA + S-adenosyl-L-methionine = N(1)-methylguanosine(37) in tRNA + S-adenosyl-L-homocysteine + H(+). In terms of biological role, specifically methylates guanosine-37 in various tRNAs. The sequence is that of tRNA (guanine-N(1)-)-methyltransferase from Chlamydia trachomatis serovar L2 (strain ATCC VR-902B / DSM 19102 / 434/Bu).